The primary structure comprises 144 residues: HTH-type transcriptional regulator BilQ (144 aa).

The 134-residue stretch at 1-134 (MEQTFAYYTT…LFTLLQKLGK (134 aa)) folds into the HTH marR-type domain. Residues 48–71 (QRELAAAVRADEGYAARSVEKLLQ) constitute a DNA-binding region (H-T-H motif).

Functionally, transcription regulator that regulates expression of the bilirubin reductase operon (bilQ, bilR and bilS). This chain is HTH-type transcriptional regulator BilQ, found in Clostridium symbiosum (strain WAL-14163).